A 228-amino-acid polypeptide reads, in one-letter code: Ankyrin repeat domain-containing protein 46 (228 aa).

ANK repeat units lie at residues glutamine 11–isoleucine 40, arginine 44–alanine 73, glutamine 77–isoleucine 103, and glutamine 107–glycine 138. A helical membrane pass occupies residues valine 195–glycine 215.

The protein localises to the membrane. In Bos taurus (Bovine), this protein is Ankyrin repeat domain-containing protein 46 (ANKRD46).